Consider the following 290-residue polypeptide: 33 kDa chaperonin (290 aa).

2 disulfides stabilise this stretch: Cys-235-Cys-237 and Cys-268-Cys-271.

This sequence belongs to the HSP33 family. Under oxidizing conditions two disulfide bonds are formed involving the reactive cysteines. Under reducing conditions zinc is bound to the reactive cysteines and the protein is inactive.

It localises to the cytoplasm. Its function is as follows. Redox regulated molecular chaperone. Protects both thermally unfolding and oxidatively damaged proteins from irreversible aggregation. Plays an important role in the bacterial defense system toward oxidative stress. The polypeptide is 33 kDa chaperonin (Streptococcus pyogenes serotype M2 (strain MGAS10270)).